The chain runs to 163 residues: uncharacterized protein (163 aa).

The interval 30-163 is disordered; it reads GNENTSVSSD…IYKKLGKKKR (134 aa). A compositionally biased stretch (basic and acidic residues) spans 88–118; that stretch reads ERQLQKKKEAEKIEGGKNHDNLKRKLNKVGD. Acidic residues predominate over residues 119 to 133; it reads ELNEQQSDTDDDDDD. S125 is subject to Phosphoserine. At T127 the chain carries Phosphothreonine.

It localises to the nucleus. The protein localises to the nucleolus. This is an uncharacterized protein from Schizosaccharomyces pombe (strain 972 / ATCC 24843) (Fission yeast).